We begin with the raw amino-acid sequence, 289 residues long: Thymidylate synthase (289 aa).

DUMP is bound by residues arginine 26 and 151–152 (RR). The active-site Nucleophile is cysteine 171. Residues 191 to 194 (RSGD), asparagine 202, and 232 to 234 (HVY) contribute to the dUMP site. Aspartate 194 provides a ligand contact to (6R)-5,10-methylene-5,6,7,8-tetrahydrofolate. A (6R)-5,10-methylene-5,6,7,8-tetrahydrofolate-binding site is contributed by alanine 288.

Belongs to the thymidylate synthase family. As to quaternary structure, homodimer.

The catalysed reaction is dUMP + (6R)-5,10-methylene-5,6,7,8-tetrahydrofolate = 7,8-dihydrofolate + dTMP. It participates in pyrimidine metabolism; dTTP biosynthesis. The polypeptide is Thymidylate synthase (Equus caballus (Horse)).